The sequence spans 124 residues: Small ribosomal subunit protein bS6 (124 aa).

The tract at residues 99-124 (PLPAPRIVPGSEPEPVEQQEAAAVEA) is disordered. The segment covering 114–124 (VEQQEAAAVEA) has biased composition (low complexity).

The protein belongs to the bacterial ribosomal protein bS6 family.

In terms of biological role, binds together with bS18 to 16S ribosomal RNA. The chain is Small ribosomal subunit protein bS6 from Prochlorococcus marinus (strain MIT 9303).